We begin with the raw amino-acid sequence, 202 residues long: LexA repressor 2 (202 aa).

A DNA-binding region (H-T-H motif) is located at residues 28–48; sequence LADIATRFGFASRSVARKHIT. Active-site for autocatalytic cleavage activity residues include S123 and K160.

The protein belongs to the peptidase S24 family. As to quaternary structure, homodimer.

The catalysed reaction is Hydrolysis of Ala-|-Gly bond in repressor LexA.. Functionally, represses a number of genes involved in the response to DNA damage (SOS response), including recA and lexA. In the presence of single-stranded DNA, RecA interacts with LexA causing an autocatalytic cleavage which disrupts the DNA-binding part of LexA, leading to derepression of the SOS regulon and eventually DNA repair. The protein is LexA repressor 2 of Pseudomonas putida (strain ATCC 47054 / DSM 6125 / CFBP 8728 / NCIMB 11950 / KT2440).